A 281-amino-acid polypeptide reads, in one-letter code: MYDLAGKHVCYVADCGGIALETSKVLMTKNIAKLAILQSVENQPAIAQLQSIKHSTQIFFWTFDVTMAREEMKKYFDEVMVQMDYIDVLINGATLCDERNIDATINTNLTGMMNTVATVLPYMDRKMGGSGGLIVNVTSVIGLDPSPVFCAYSASKFGVIGFTRSLADPLYYNQNGVAVMAVCCGPTKVFVDRELNAFLEYGQTFADRLRLAPCQSTAVCGQNIVNAIERSQNGQIWIADKGGLELVTLHWYWHMADQFISYMQSTDDEDQECFLSAAYRK.

11–34 contacts NAD(+); sequence YVADCGGIALETSKVLMTKNIAKL. Residue Ser139 participates in substrate binding. The Proton acceptor role is filled by Tyr152.

This sequence belongs to the short-chain dehydrogenases/reductases (SDR) family.

In Drosophila ambigua (Fruit fly), this protein is Alcohol dehydrogenase-related 31 kDa protein (Adhr).